The primary structure comprises 39 residues: Cytochrome b559 subunit beta (39 aa).

A helical transmembrane segment spans residues 14–30 (WLAVHGLAVPTVSFLGS). Position 18 (histidine 18) interacts with heme.

This sequence belongs to the PsbE/PsbF family. As to quaternary structure, heterodimer of an alpha subunit and a beta subunit. PSII is composed of 1 copy each of membrane proteins PsbA, PsbB, PsbC, PsbD, PsbE, PsbF, PsbH, PsbI, PsbJ, PsbK, PsbL, PsbM, PsbT, PsbX, PsbY, PsbZ, Psb30/Ycf12, at least 3 peripheral proteins of the oxygen-evolving complex and a large number of cofactors. It forms dimeric complexes. Requires heme b as cofactor.

It localises to the plastid. It is found in the chloroplast thylakoid membrane. Functionally, this b-type cytochrome is tightly associated with the reaction center of photosystem II (PSII). PSII is a light-driven water:plastoquinone oxidoreductase that uses light energy to abstract electrons from H(2)O, generating O(2) and a proton gradient subsequently used for ATP formation. It consists of a core antenna complex that captures photons, and an electron transfer chain that converts photonic excitation into a charge separation. This is Cytochrome b559 subunit beta from Muilla maritima (Sea muilla).